Reading from the N-terminus, the 487-residue chain is MSLKVYNTLTGKKEEFVPIKPGEVKIYTCGVTVYDVNHVGHGRSLIVFDVIRRYLRYLGYNVYFVRNFTDVDDKIINRAKNECLPFTVIADRYIKEYFQDAENFRIEPADVEPRVTTHIPDIIDFIQRLIDKGYAYEVEGDVYFSVRKFKEYGKLSKRSVDELIAGARVEPGEKKRDPLDFALWKASKAGEPAWDSPWGKGRPGWHTECCAMIFKHLGETIDIHGGGLDLTFPHHENELAQAEALSDKPFARYWIHNGLVTVNGQKMSKSLGNYITLKEIYSKYDPDVLRLLVLSVHYRSPLDFSWEKMEETKKAYERLKGAIDEYEILKKLPENPDFDEHLYDEIAKAEQGFYAAMSDDFNTPEALASLFTLVREMNILRDKAVKSGGISKKALESYKEASDVLHSIGKEIFGLFDSLQPCIEVEEIKVEKAEEKIDTQLVEALIEVRNKARKEKQFEIADYIREKLSQLGIVIEDTPVGTKWKKK.

Cysteine 29 contacts Zn(2+). Positions 31–41 match the 'HIGH' region motif; it reads VTVYDVNHVGH. Residues cysteine 209, histidine 234, and glutamate 238 each coordinate Zn(2+). A 'KMSKS' region motif is present at residues 266 to 270; the sequence is KMSKS. Lysine 269 contacts ATP.

The protein belongs to the class-I aminoacyl-tRNA synthetase family. Monomer. It depends on Zn(2+) as a cofactor.

It localises to the cytoplasm. It catalyses the reaction tRNA(Cys) + L-cysteine + ATP = L-cysteinyl-tRNA(Cys) + AMP + diphosphate. In Persephonella marina (strain DSM 14350 / EX-H1), this protein is Cysteine--tRNA ligase.